A 934-amino-acid chain; its full sequence is Serine/threonine-protein kinase PknD (934 aa).

Residues 4–296 (YELIRLIGKG…ELRQALQPYL (293 aa)) form the Protein kinase domain. Residues 10-18 (IGKGGMGEV) and Lys-33 each bind ATP. Asp-138 functions as the Proton acceptor in the catalytic mechanism.

Belongs to the protein kinase superfamily. Ser/Thr protein kinase family. Post-translationally, autophosphorylated on serine and threonine residues.

The catalysed reaction is L-seryl-[protein] + ATP = O-phospho-L-seryl-[protein] + ADP + H(+). The enzyme catalyses L-threonyl-[protein] + ATP = O-phospho-L-threonyl-[protein] + ADP + H(+). In terms of biological role, together with the serine/threonine kinase Pkn1, may play a role in the specific interactions with host proteins during intracellular growth. In Chlamydia trachomatis serovar A (strain ATCC VR-571B / DSM 19440 / HAR-13), this protein is Serine/threonine-protein kinase PknD.